The sequence spans 254 residues: 5'/3'-nucleotidase SurE (254 aa).

Residues Asp-9, Asp-10, Ser-40, and Asn-93 each coordinate a divalent metal cation.

The protein belongs to the SurE nucleotidase family. Requires a divalent metal cation as cofactor.

It localises to the cytoplasm. The catalysed reaction is a ribonucleoside 5'-phosphate + H2O = a ribonucleoside + phosphate. The enzyme catalyses a ribonucleoside 3'-phosphate + H2O = a ribonucleoside + phosphate. It carries out the reaction [phosphate](n) + H2O = [phosphate](n-1) + phosphate + H(+). Its function is as follows. Nucleotidase with a broad substrate specificity as it can dephosphorylate various ribo- and deoxyribonucleoside 5'-monophosphates and ribonucleoside 3'-monophosphates with highest affinity to 3'-AMP. Also hydrolyzes polyphosphate (exopolyphosphatase activity) with the preference for short-chain-length substrates (P20-25). Might be involved in the regulation of dNTP and NTP pools, and in the turnover of 3'-mononucleotides produced by numerous intracellular RNases (T1, T2, and F) during the degradation of various RNAs. This Yersinia pseudotuberculosis serotype O:1b (strain IP 31758) protein is 5'/3'-nucleotidase SurE.